The sequence spans 79 residues: Dicentracin (79 aa).

The signal sequence occupies residues 1–22; it reads MKCATLFLVLSMVVLMAEPGDA. Glycine 44 bears the Glycine amide mark. Residues 47 to 79 constitute a propeptide that is removed on maturation; that stretch reads AQQDQQDQQYQQDQQDQQAEQYQRFNRERAAFD. The segment at 48 to 67 is disordered; sequence QQDQQDQQYQQDQQDQQAEQ.

Belongs to the pleurocidin family.

It is found in the secreted. In Dicentrarchus labrax (European seabass), this protein is Dicentracin.